Here is a 292-residue protein sequence, read N- to C-terminus: NAD kinase (292 aa).

The active-site Proton acceptor is D73. NAD(+) contacts are provided by residues 73–74, 147–148, H158, R175, D177, 188–193, and Q247; these read DG, NE, and TAYSLS.

It belongs to the NAD kinase family. It depends on a divalent metal cation as a cofactor.

Its subcellular location is the cytoplasm. The enzyme catalyses NAD(+) + ATP = ADP + NADP(+) + H(+). Its function is as follows. Involved in the regulation of the intracellular balance of NAD and NADP, and is a key enzyme in the biosynthesis of NADP. Catalyzes specifically the phosphorylation on 2'-hydroxyl of the adenosine moiety of NAD to yield NADP. This Escherichia coli O157:H7 protein is NAD kinase.